The sequence spans 196 residues: tRNA(Phe) 7-((3-amino-3-carboxypropyl)-4-demethylwyosine(37)-N(4))-methyltransferase (196 aa).

Belongs to the TYW3 family.

The enzyme catalyses 4-demethyl-7-[(3S)-3-amino-3-carboxypropyl]wyosine(37) in tRNA(Phe) + S-adenosyl-L-methionine = 7-[(3S)-3-amino-3-carboxypropyl]wyosine(37) in tRNA(Phe) + S-adenosyl-L-homocysteine + H(+). In terms of biological role, S-adenosyl-L-methionine-dependent methyltransferase that acts as a component of the wyosine derivatives biosynthesis pathway. Probably methylates N-4 position of wybutosine-86 to produce wybutosine-72. This Archaeoglobus fulgidus (strain ATCC 49558 / DSM 4304 / JCM 9628 / NBRC 100126 / VC-16) protein is tRNA(Phe) 7-((3-amino-3-carboxypropyl)-4-demethylwyosine(37)-N(4))-methyltransferase.